The primary structure comprises 254 residues: Probable protein S-acyltransferase 15 (254 aa).

2 helical membrane-spanning segments follow: residues 1-21 (MGFV…GLQS) and 28-48 (ALLF…CVLV). The DHHC domain occupies 75 to 125 (RKCDKCFAYKPLRTHHCRVCRRCVLKMDHHCLWINNCVGYANYKAFFILVF). Cys-105 serves as the catalytic S-palmitoyl cysteine intermediate. Helical transmembrane passes span 119–139 (AFFI…VLLV) and 164–184 (IFMI…IYLI).

This sequence belongs to the DHHC palmitoyltransferase family.

The protein localises to the endoplasmic reticulum membrane. Its subcellular location is the cytoplasmic vesicle membrane. The enzyme catalyses L-cysteinyl-[protein] + hexadecanoyl-CoA = S-hexadecanoyl-L-cysteinyl-[protein] + CoA. Its function is as follows. Palmitoyl acyltransferase. The polypeptide is Probable protein S-acyltransferase 15 (PAT15) (Arabidopsis thaliana (Mouse-ear cress)).